Reading from the N-terminus, the 402-residue chain is MAPSEKDIEEVSVPGVLAPRDDVRVLKTRIAKLLGTSPDTFPGSQPVSFSKKHLQALKEKNYFVCEKSDGIRCLLYMTEHPRYENRPSVYLFDRKMNFYHVEKIFYPVENDKSGKKYHVDTLLDGELVLDIYPGGKKQLRYLVFDCLACDGIVYMSRLLDKRLGIFAKSIQKPLDEYTKTHMRETAIFPFLTSLKKMELGHGILKLFNEVIPRLRHGNDGLIFTCTETPYVSGTDQSLLKWKPKEMNTIDFMLKLEFAQPEEGDIDYSAMPEFQLGVWEGRNMYSFFAFMYVDEKEWEKLKSFNVPLSERIVECYLDDENRWRFLRFRDDKRDANHISTVKSVLQSIEDGVSKEDLLKEMPIIREAYYNRKKPSVTKRKLDETSNDDAPAIKKVAKESEKEI.

Residue K67 is the N6-GMP-lysine intermediate of the active site. Residues 374-402 (SVTKRKLDETSNDDAPAIKKVAKESEKEI) form a disordered region.

Belongs to the eukaryotic GTase family. In terms of assembly, heterodimer. The mRNA-capping enzyme is composed of two separate chains alpha and beta, respectively a mRNA guanylyltransferase and an mRNA 5'-triphosphate monophosphatase.

The protein localises to the nucleus. It catalyses the reaction a 5'-end diphospho-ribonucleoside in mRNA + GTP + H(+) = a 5'-end (5'-triphosphoguanosine)-ribonucleoside in mRNA + diphosphate. Its function is as follows. Second step of mRNA capping. Transfer of the GMP moiety of GTP to the 5'-end of RNA via an enzyme-GMP covalent reaction intermediate. The polypeptide is mRNA-capping enzyme subunit alpha (ceg1) (Schizosaccharomyces pombe (strain 972 / ATCC 24843) (Fission yeast)).